The following is a 288-amino-acid chain: MAKDIEASGPEAGEFSAKDYTDPPPAPLIDAEELTQWSLYRAVIAEFIATLLFLYITVATVIGYKHQTDASASGPDAACGGVGILGIAWAFGGMIFILVYCTAGISGGHINPAVTFGLFLARKVSLVRALLYIIAQCLGAICGVGLVKGFQSAYYVRYGGGANELSDGYSKGTGLAAEIIGTFVLVYTVFSATDPKRSARDSHVPVLAPLPIGFAVFMVHLATIPITGTGINPARSLGAAVIYNKDKAWDDQWIFWVGPLIGAAIAAAYHQYVLRASATKLGSYRSNA.

The interval 1–24 (MAKDIEASGPEAGEFSAKDYTDPP) is disordered. The next 2 membrane-spanning stretches (helical) occupy residues 42–62 (AVIA…ATVI) and 79–99 (CGGV…FILV). Residues 111–113 (NPA) carry the NPA 1 motif. Transmembrane regions (helical) follow at residues 130 to 150 (LLYI…VKGF), 172 to 192 (GTGL…VFSA), and 206 to 226 (VLAP…TIPI). Positions 232–234 (NPA) match the NPA 2 motif. The chain crosses the membrane as a helical span at residues 254-274 (IFWVGPLIGAAIAAAYHQYVL).

It belongs to the MIP/aquaporin (TC 1.A.8) family. PIP (TC 1.A.8.11) subfamily. In terms of assembly, homomers. May interact with PIP1-2 to form heteromers. In terms of tissue distribution, expressed in the root growing zone at 5-6 mm from the root tip.

The protein resides in the cell membrane. Its function is as follows. Water channel required to facilitate the transport of water across cell membrane. Active as homomers. Increased activity when heteromerization with PIP1-2. This chain is Aquaporin PIP2-4 (PIP2-4), found in Zea mays (Maize).